Here is a 446-residue protein sequence, read N- to C-terminus: Tubulin alpha-1B chain (446 aa).

Residue Gln11 coordinates GTP. Residues 34-55 (GRLMDDSPSKHDSGSTFFSETG) form a disordered region. The segment covering 35-46 (RLMDDSPSKHDS) has biased composition (basic and acidic residues). GTP contacts are provided by Glu69, Ser138, Gly142, Thr143, Ser177, Asn204, and Asn226. Mg(2+) is bound at residue Glu69. Glu252 is a catalytic residue.

This sequence belongs to the tubulin family. Dimer of alpha and beta chains. A typical microtubule is a hollow water-filled tube with an outer diameter of 25 nm and an inner diameter of 15 nM. Alpha-beta heterodimers associate head-to-tail to form protofilaments running lengthwise along the microtubule wall with the beta-tubulin subunit facing the microtubule plus end conferring a structural polarity. Microtubules usually have 13 protofilaments but different protofilament numbers can be found in some organisms and specialized cells. Mg(2+) serves as cofactor.

Its subcellular location is the cytoplasm. It localises to the cytoskeleton. It catalyses the reaction GTP + H2O = GDP + phosphate + H(+). Functionally, tubulin is the major constituent of microtubules, a cylinder consisting of laterally associated linear protofilaments composed of alpha- and beta-tubulin heterodimers. Microtubules grow by the addition of GTP-tubulin dimers to the microtubule end, where a stabilizing cap forms. Below the cap, tubulin dimers are in GDP-bound state, owing to GTPase activity of alpha-tubulin. The sequence is that of Tubulin alpha-1B chain (TUB-1B) from Schizophyllum commune (Split gill fungus).